A 135-amino-acid chain; its full sequence is Large ribosomal subunit protein uL16c (135 aa).

An N-methylmethionine modification is found at M1.

As to quaternary structure, component of the chloroplast large ribosomal subunit (LSU). Mature 70S chloroplast ribosomes of higher plants consist of a small (30S) and a large (50S) subunit. The 30S small subunit contains 1 molecule of ribosomal RNA (16S rRNA) and 24 different proteins. The 50S large subunit contains 3 rRNA molecules (23S, 5S and 4.5S rRNA) and 33 different proteins. In terms of processing, partially alpha-N-monomethylated at Met-1 (10%), whereas 90% of it is blocked to Edman degradation, probably by trimethylation.

The protein localises to the plastid. It is found in the chloroplast. In terms of biological role, component of the chloroplast ribosome (chloro-ribosome), a dedicated translation machinery responsible for the synthesis of chloroplast genome-encoded proteins, including proteins of the transcription and translation machinery and components of the photosynthetic apparatus. The sequence is that of Large ribosomal subunit protein uL16c from Spinacia oleracea (Spinach).